Reading from the N-terminus, the 719-residue chain is Pesticidal crystal protein Cry1Ia (719 aa).

It belongs to the delta endotoxin family.

Functionally, promotes colloidosmotic lysis by binding to the midgut epithelial cells of certain coleopteran and lepidopteran species. Active on Plutella xylostella and Bombyx mori. The sequence is that of Pesticidal crystal protein Cry1Ia (cry1Ia) from Bacillus thuringiensis subsp. kurstaki.